Here is a 285-residue protein sequence, read N- to C-terminus: Pantothenate synthetase (285 aa).

30 to 37 (MGFLHEGH) contributes to the ATP binding site. His37 acts as the Proton donor in catalysis. (R)-pantoate is bound at residue Gln61. Gln61 is a binding site for beta-alanine. ATP is bound at residue 147–150 (GQKD). Gln153 contributes to the (R)-pantoate binding site. ATP is bound by residues Val176 and 184 to 187 (KSSR).

It belongs to the pantothenate synthetase family. Homodimer.

It localises to the cytoplasm. It catalyses the reaction (R)-pantoate + beta-alanine + ATP = (R)-pantothenate + AMP + diphosphate + H(+). The protein operates within cofactor biosynthesis; (R)-pantothenate biosynthesis; (R)-pantothenate from (R)-pantoate and beta-alanine: step 1/1. Its function is as follows. Catalyzes the condensation of pantoate with beta-alanine in an ATP-dependent reaction via a pantoyl-adenylate intermediate. In Listeria welshimeri serovar 6b (strain ATCC 35897 / DSM 20650 / CCUG 15529 / CIP 8149 / NCTC 11857 / SLCC 5334 / V8), this protein is Pantothenate synthetase.